The following is a 438-amino-acid chain: 23S rRNA (uracil(1939)-C(5))-methyltransferase RlmD (438 aa).

Positions 10-69 (KASVNTKHLSVDVVRLDHNSAGIAFVDKKPVFIEGALPEEQAIIQFIEQKKQYSRAKLIK) constitute a TRAM domain. Residues cysteine 82, cysteine 88, cysteine 91, and cysteine 169 each contribute to the [4Fe-4S] cluster site. S-adenosyl-L-methionine is bound by residues glutamine 272, phenylalanine 301, asparagine 306, glutamate 322, asparagine 349, and aspartate 370. Residue cysteine 396 is the Nucleophile of the active site.

It belongs to the class I-like SAM-binding methyltransferase superfamily. RNA M5U methyltransferase family. RlmD subfamily.

The catalysed reaction is uridine(1939) in 23S rRNA + S-adenosyl-L-methionine = 5-methyluridine(1939) in 23S rRNA + S-adenosyl-L-homocysteine + H(+). Catalyzes the formation of 5-methyl-uridine at position 1939 (m5U1939) in 23S rRNA. This is 23S rRNA (uracil(1939)-C(5))-methyltransferase RlmD from Aliivibrio salmonicida (strain LFI1238) (Vibrio salmonicida (strain LFI1238)).